The following is a 350-amino-acid chain: Anthranilate phosphoribosyltransferase (350 aa).

5-phospho-alpha-D-ribose 1-diphosphate-binding positions include glycine 94, 97–98, threonine 102, 104–107, 122–130, and serine 134; these read GD, NIST, and KHGNRSVSS. Glycine 94 is a binding site for anthranilate. Serine 106 serves as a coordination point for Mg(2+). Asparagine 125 contributes to the anthranilate binding site. Residue arginine 180 participates in anthranilate binding. Mg(2+) is bound by residues aspartate 239 and glutamate 240.

This sequence belongs to the anthranilate phosphoribosyltransferase family. As to quaternary structure, homodimer. It depends on Mg(2+) as a cofactor.

It carries out the reaction N-(5-phospho-beta-D-ribosyl)anthranilate + diphosphate = 5-phospho-alpha-D-ribose 1-diphosphate + anthranilate. The protein operates within amino-acid biosynthesis; L-tryptophan biosynthesis; L-tryptophan from chorismate: step 2/5. In terms of biological role, catalyzes the transfer of the phosphoribosyl group of 5-phosphorylribose-1-pyrophosphate (PRPP) to anthranilate to yield N-(5'-phosphoribosyl)-anthranilate (PRA). This Geotalea daltonii (strain DSM 22248 / JCM 15807 / FRC-32) (Geobacter daltonii) protein is Anthranilate phosphoribosyltransferase.